The sequence spans 473 residues: Glutamyl-tRNA reductase (473 aa).

Residues 49-52 (TCNR), Ser-109, 114-116 (EQQ), and Gln-120 each bind substrate. The active-site Nucleophile is the Cys-50. NADP(+) is bound at residue 189 to 194 (GAGSMG). The disordered stretch occupies residues 445 to 473 (SGLDAGSGPQGADGPSAGPTPSAPNPSAE).

The protein belongs to the glutamyl-tRNA reductase family. As to quaternary structure, homodimer.

It carries out the reaction (S)-4-amino-5-oxopentanoate + tRNA(Glu) + NADP(+) = L-glutamyl-tRNA(Glu) + NADPH + H(+). The protein operates within porphyrin-containing compound metabolism; protoporphyrin-IX biosynthesis; 5-aminolevulinate from L-glutamyl-tRNA(Glu): step 1/2. Catalyzes the NADPH-dependent reduction of glutamyl-tRNA(Glu) to glutamate 1-semialdehyde (GSA). This chain is Glutamyl-tRNA reductase, found in Mycobacterium ulcerans (strain Agy99).